A 418-amino-acid polypeptide reads, in one-letter code: Glutamyl-tRNA reductase (418 aa).

Substrate-binding positions include 49 to 52, Ser109, 114 to 116, and Gln120; these read TCNR and EPQ. Cys50 functions as the Nucleophile in the catalytic mechanism. Residue 189–194 coordinates NADP(+); it reads GAGETI.

The protein belongs to the glutamyl-tRNA reductase family. As to quaternary structure, homodimer.

The enzyme catalyses (S)-4-amino-5-oxopentanoate + tRNA(Glu) + NADP(+) = L-glutamyl-tRNA(Glu) + NADPH + H(+). It participates in porphyrin-containing compound metabolism; protoporphyrin-IX biosynthesis; 5-aminolevulinate from L-glutamyl-tRNA(Glu): step 1/2. Its function is as follows. Catalyzes the NADPH-dependent reduction of glutamyl-tRNA(Glu) to glutamate 1-semialdehyde (GSA). The sequence is that of Glutamyl-tRNA reductase from Salmonella heidelberg (strain SL476).